Consider the following 284-residue polypeptide: Nucleotide-binding protein Teth39_0666 (284 aa).

Residue 8–15 (GLSGAGKT) participates in ATP binding. Residue 58 to 61 (DLRG) coordinates GTP.

Belongs to the RapZ-like family.

Functionally, displays ATPase and GTPase activities. This Thermoanaerobacter pseudethanolicus (strain ATCC 33223 / 39E) (Clostridium thermohydrosulfuricum) protein is Nucleotide-binding protein Teth39_0666.